Consider the following 228-residue polypeptide: 5'-methylthioadenosine/S-adenosylhomocysteine nucleosidase (228 aa).

Glutamate 11 functions as the Proton acceptor in the catalytic mechanism. Substrate contacts are provided by residues glycine 77, isoleucine 151, and 172–173 (ME). The Proton donor role is filled by aspartate 196.

Belongs to the PNP/UDP phosphorylase family. MtnN subfamily.

It catalyses the reaction S-adenosyl-L-homocysteine + H2O = S-(5-deoxy-D-ribos-5-yl)-L-homocysteine + adenine. The enzyme catalyses S-methyl-5'-thioadenosine + H2O = 5-(methylsulfanyl)-D-ribose + adenine. The catalysed reaction is 5'-deoxyadenosine + H2O = 5-deoxy-D-ribose + adenine. The protein operates within amino-acid biosynthesis; L-methionine biosynthesis via salvage pathway; S-methyl-5-thio-alpha-D-ribose 1-phosphate from S-methyl-5'-thioadenosine (hydrolase route): step 1/2. Its function is as follows. Catalyzes the irreversible cleavage of the glycosidic bond in both 5'-methylthioadenosine (MTA) and S-adenosylhomocysteine (SAH/AdoHcy) to adenine and the corresponding thioribose, 5'-methylthioribose and S-ribosylhomocysteine, respectively. Also cleaves 5'-deoxyadenosine, a toxic by-product of radical S-adenosylmethionine (SAM) enzymes, into 5-deoxyribose and adenine. In Staphylococcus carnosus (strain TM300), this protein is 5'-methylthioadenosine/S-adenosylhomocysteine nucleosidase.